Reading from the N-terminus, the 91-residue chain is Putative regulatory protein Cyan7425_4125 (91 aa).

It belongs to the RemA family.

This Cyanothece sp. (strain PCC 7425 / ATCC 29141) protein is Putative regulatory protein Cyan7425_4125.